Here is a 121-residue protein sequence, read N- to C-terminus: Insulin-like peptide 01 (121 aa).

An N-terminal signal peptide occupies residues 1–24 (MDSFTRASLITFLILLTLTSLVFS). The propeptide occupies 25–45 (NGCMMRGGCFKTSEDAHRLIM). 3 disulfide bridges follow: Cys52-Cys107, Cys64-Cys120, and Cys106-Cys111. A propeptide spans 69–97 (RRRKRDLRRKLGIVMDRKESHKFLRRRKR) (c peptide).

Belongs to the insulin family.

The protein localises to the secreted. In terms of biological role, insulin decreases blood glucose concentration. May have evolved to activate insulin receptors (INSR) in vertebrates. Molecular docking studies reveals unique interaction with the human insulin receptor. In vivo, insulin-like peptide injection reduces blood glucose levels in two models of zebrafish diabetes (streptozotocin- and glucose-induced). Also shorter swimming distance of zebrafish larvae, an effect which is not observed with human insulin. The chain is Insulin-like peptide 01 from Exaiptasia diaphana (Tropical sea anemone).